A 192-amino-acid polypeptide reads, in one-letter code: Peptidyl-tRNA hydrolase (192 aa).

Histidine 17 is a binding site for tRNA. Histidine 22 serves as the catalytic Proton acceptor. Residues phenylalanine 68, asparagine 70, and asparagine 116 each contribute to the tRNA site.

This sequence belongs to the PTH family. Monomer.

The protein localises to the cytoplasm. It carries out the reaction an N-acyl-L-alpha-aminoacyl-tRNA + H2O = an N-acyl-L-amino acid + a tRNA + H(+). Hydrolyzes ribosome-free peptidyl-tRNAs (with 1 or more amino acids incorporated), which drop off the ribosome during protein synthesis, or as a result of ribosome stalling. In terms of biological role, catalyzes the release of premature peptidyl moieties from peptidyl-tRNA molecules trapped in stalled 50S ribosomal subunits, and thus maintains levels of free tRNAs and 50S ribosomes. The protein is Peptidyl-tRNA hydrolase of Stenotrophomonas maltophilia (strain K279a).